The following is a 255-amino-acid chain: Ornithine decarboxylase antizyme (255 aa).

This sequence belongs to the ODC antizyme family. Interacts with ODC and thereby sterically blocks ODC homodimerization.

In terms of biological role, ornithine decarboxylase (ODC) antizyme protein that negatively regulates ODC activity and intracellular polyamine biosynthesis in response to increased intracellular polyamine levels. Binds to ODC monomers, inhibiting the assembly of the functional ODC homodimer, and targets the monomers for ubiquitin-independent proteolytic destruction by the 26S proteasome. This is Ornithine decarboxylase antizyme (OAZ1) from Candida glabrata (strain ATCC 2001 / BCRC 20586 / JCM 3761 / NBRC 0622 / NRRL Y-65 / CBS 138) (Yeast).